A 535-amino-acid polypeptide reads, in one-letter code: CTP synthase (535 aa).

Positions 1 to 270 are amidoligase domain; sequence MSKNTKYVFV…DRLVCEKLGL (270 aa). Ser16 is a CTP binding site. Ser16 contributes to the UTP binding site. 17 to 22 provides a ligand contact to ATP; sequence SLGKGI. L-glutamine is bound at residue Tyr57. An ATP-binding site is contributed by Asp74. 2 residues coordinate Mg(2+): Asp74 and Glu144. Residues 151-153, 191-196, and Lys227 contribute to the CTP site; these read DIE and KTKPTQ. UTP is bound by residues 191-196 and Lys227; that span reads KTKPTQ. The region spanning 295–535 is the Glutamine amidotransferase type-1 domain; the sequence is KIALVGKYVE…GFVGAALNNK (241 aa). Residue Gly357 coordinates L-glutamine. The Nucleophile; for glutamine hydrolysis role is filled by Cys384. L-glutamine contacts are provided by residues 385 to 388, Glu408, and Arg465; that span reads LGMQ. Residues His510 and Glu512 contribute to the active site.

Belongs to the CTP synthase family. As to quaternary structure, homotetramer.

It carries out the reaction UTP + L-glutamine + ATP + H2O = CTP + L-glutamate + ADP + phosphate + 2 H(+). It catalyses the reaction L-glutamine + H2O = L-glutamate + NH4(+). The catalysed reaction is UTP + NH4(+) + ATP = CTP + ADP + phosphate + 2 H(+). It participates in pyrimidine metabolism; CTP biosynthesis via de novo pathway; CTP from UDP: step 2/2. With respect to regulation, allosterically activated by GTP, when glutamine is the substrate; GTP has no effect on the reaction when ammonia is the substrate. The allosteric effector GTP functions by stabilizing the protein conformation that binds the tetrahedral intermediate(s) formed during glutamine hydrolysis. Inhibited by the product CTP, via allosteric rather than competitive inhibition. Its function is as follows. Catalyzes the ATP-dependent amination of UTP to CTP with either L-glutamine or ammonia as the source of nitrogen. Regulates intracellular CTP levels through interactions with the four ribonucleotide triphosphates. The sequence is that of CTP synthase from Clostridium perfringens (strain ATCC 13124 / DSM 756 / JCM 1290 / NCIMB 6125 / NCTC 8237 / Type A).